The chain runs to 606 residues: NADH-ubiquinone oxidoreductase chain 5 (606 aa).

A run of 14 helical transmembrane segments spans residues 1-21 (MNMFSSCMITALVILTLPIIM), 43-63 (AFMISMIPTMMFIYSGQETII), 87-107 (MIFVPVALFVTWSIMEFSMWY), 117-137 (FFKYLLLFLITMMVLVTANNM), 140-160 (LFIGWEGVGIMSFLLIGWWYG), 171-191 (AVLYNRIGDVGFIMTMAWFLL), 241-261 (TPVSALLHSSTMVVAGVFLLI), 273-293 (IQTLTLCLGAITTLFTAICAL), 310-330 (LGLMMVTIGINQPYLAFLHIC), 365-385 (VLPFTTTSLIIGSLALTGMPF), 409-429 (LLITLVATSLTAAYSTRIMFF), 457-477 (LLIGSVFAGYIISHSITPTTI), 488-508 (MTALAVTILGFILALELNLTT), and 582-602 (GLIKLYFLSFMLTMILSLLIL).

It belongs to the complex I subunit 5 family. As to quaternary structure, core subunit of respiratory chain NADH dehydrogenase (Complex I) which is composed of 45 different subunits.

It localises to the mitochondrion inner membrane. The catalysed reaction is a ubiquinone + NADH + 5 H(+)(in) = a ubiquinol + NAD(+) + 4 H(+)(out). Its function is as follows. Core subunit of the mitochondrial membrane respiratory chain NADH dehydrogenase (Complex I) which catalyzes electron transfer from NADH through the respiratory chain, using ubiquinone as an electron acceptor. Essential for the catalytic activity and assembly of complex I. The sequence is that of NADH-ubiquinone oxidoreductase chain 5 (MT-ND5) from Canis lupus (Gray wolf).